The chain runs to 276 residues: Undecaprenyl-diphosphatase 1 (276 aa).

7 consecutive transmembrane segments (helical) span residues 4–24, 45–62, 83–103, 108–128, 187–207, 217–237, and 252–272; these read ILIC…FLPV, KTFD…VCWE, FTLN…LFEK, VLFS…IILW, VATE…TLYE, VDSL…AFVC, and VFAW…YSGW.

It belongs to the UppP family.

The protein resides in the cell inner membrane. It catalyses the reaction di-trans,octa-cis-undecaprenyl diphosphate + H2O = di-trans,octa-cis-undecaprenyl phosphate + phosphate + H(+). Functionally, catalyzes the dephosphorylation of undecaprenyl diphosphate (UPP). Confers resistance to bacitracin. This is Undecaprenyl-diphosphatase 1 from Burkholderia ambifaria (strain ATCC BAA-244 / DSM 16087 / CCUG 44356 / LMG 19182 / AMMD) (Burkholderia cepacia (strain AMMD)).